The primary structure comprises 960 residues: Probable RNA-binding protein 19 (960 aa).

The RRM 1 domain maps to 2–79 (SRLIVKNLPN…SRITVEFCKS (78 aa)). 2 disordered regions span residues 85 to 119 (KPRA…KKKK) and 149 to 294 (WAND…TTCH). Phosphoserine is present on residues serine 174, serine 176, and serine 180. Residues 176 to 194 (SGQESEEEGAGEDLEEEAS) show a composition bias toward acidic residues. Residues 273-286 (RPPEARAETEKPAN) show a composition bias toward basic and acidic residues. 2 RRM domains span residues 294–369 (HTVK…REKN) and 402–480 (GRLF…PSTI). Residue lysine 481 forms a Glycyl lysine isopeptide (Lys-Gly) (interchain with G-Cter in SUMO2) linkage. Positions 491 to 513 (LGSSSYKKKKEAQDKANSASSHN) are disordered. Residues 587–659 (TVILVKNLPA…VPLYLEWAPV (73 aa)) enclose the RRM 4 domain. Residues 667–729 (PQKKKLQDTP…EEEEEESLPG (63 aa)) form a disordered region. Acidic residues-rich tracts occupy residues 689–706 (TVPD…EEGA) and 714–726 (EEEE…EEES). 2 RRM domains span residues 730-811 (CTLF…ISER) and 832-912 (SKIL…WADS). Residues serine 936, serine 949, and serine 951 each carry the phosphoserine modification.

The protein belongs to the RRM MRD1 family. As to expression, expressed in the crypts of Lieberkuhn of the intestine and in intestinal neoplasia (at protein level).

The protein localises to the nucleus. It is found in the nucleolus. The protein resides in the nucleoplasm. Its subcellular location is the cytoplasm. It localises to the chromosome. Plays a role in embryo pre-implantation development. This Homo sapiens (Human) protein is Probable RNA-binding protein 19 (RBM19).